A 91-amino-acid polypeptide reads, in one-letter code: Acylphosphatase (91 aa).

Residues 3–90 (QYRIIVDGRV…EGHHRFSIVY (88 aa)) form the Acylphosphatase-like domain. Active-site residues include Arg-18 and Asn-36.

The protein belongs to the acylphosphatase family.

It carries out the reaction an acyl phosphate + H2O = a carboxylate + phosphate + H(+). The protein is Acylphosphatase (acyP) of Bacillus subtilis (strain 168).